The following is a 257-amino-acid chain: Thiazole synthase (257 aa).

Catalysis depends on Lys-100, which acts as the Schiff-base intermediate with DXP. Residues Gly-161, Ala-187 to Gly-188, and Asn-209 to Thr-210 contribute to the 1-deoxy-D-xylulose 5-phosphate site.

This sequence belongs to the ThiG family. In terms of assembly, homotetramer. Forms heterodimers with either ThiH or ThiS.

The protein resides in the cytoplasm. It carries out the reaction [ThiS sulfur-carrier protein]-C-terminal-Gly-aminoethanethioate + 2-iminoacetate + 1-deoxy-D-xylulose 5-phosphate = [ThiS sulfur-carrier protein]-C-terminal Gly-Gly + 2-[(2R,5Z)-2-carboxy-4-methylthiazol-5(2H)-ylidene]ethyl phosphate + 2 H2O + H(+). Its pathway is cofactor biosynthesis; thiamine diphosphate biosynthesis. Its function is as follows. Catalyzes the rearrangement of 1-deoxy-D-xylulose 5-phosphate (DXP) to produce the thiazole phosphate moiety of thiamine. Sulfur is provided by the thiocarboxylate moiety of the carrier protein ThiS. In vitro, sulfur can be provided by H(2)S. The polypeptide is Thiazole synthase (Zymomonas mobilis subsp. mobilis (strain ATCC 31821 / ZM4 / CP4)).